A 218-amino-acid chain; its full sequence is Oxygen regulatory protein NreC (218 aa).

Residues 2–119 enclose the Response regulatory domain; it reads KIVIADDHAV…QLILAVRTVY (118 aa). Asp53 is modified (4-aspartylphosphate). Positions 149–214 constitute an HTH luxR-type domain; sequence SSDPFKILSK…ELVEYALKKK (66 aa). The segment at residues 173–192 is a DNA-binding region (H-T-H motif); that stretch reads NKDIAEKLFVSVKTVEAHKT.

Post-translationally, phosphorylated by NreB.

It is found in the cytoplasm. Member of the two-component regulatory system NreB/NreC involved in the control of dissimilatory nitrate/nitrite reduction in response to oxygen. Phosphorylated NreC binds to a GC-rich palindromic sequence at the promoters of the nitrate (narGHJI) and nitrite (nir) reductase operons, as well as the putative nitrate transporter gene narT, and activates their expression. The protein is Oxygen regulatory protein NreC (nreC) of Staphylococcus epidermidis (strain ATCC 12228 / FDA PCI 1200).